The chain runs to 485 residues: Cobyric acid synthase (485 aa).

Residues 250-436 enclose the GATase cobBQ-type domain; the sequence is RRIVACPILP…IHGLLASPAL (187 aa). Residue Cys332 is the Nucleophile of the active site. The active site involves His428.

This sequence belongs to the CobB/CobQ family. CobQ subfamily.

It participates in cofactor biosynthesis; adenosylcobalamin biosynthesis. Catalyzes amidations at positions B, D, E, and G on adenosylcobyrinic A,C-diamide. NH(2) groups are provided by glutamine, and one molecule of ATP is hydrogenolyzed for each amidation. This is Cobyric acid synthase from Sphingopyxis alaskensis (strain DSM 13593 / LMG 18877 / RB2256) (Sphingomonas alaskensis).